The sequence spans 1377 residues: MNFRYQPNQQPYQPPQHNNNSNNRGIPTNYQQYPPQNYQQYPPQQYYQAPINPQQFYPGPPQQPNFVSQQTGPIPQQPPGFNNQSPIPQQQPQQPQQPQPSQPSPIPQQPLSPQSSSPSSPQHVVIQPNQPNQQQQNANRKQSALKPSVQHNTIPNIPRTHSAPPSLEEQQQQHQHQNNIKGFTPEKRTPIQHSPQYVIPPQQFGKPIYPNPQQMYFQQQPPYPYYGQPPVVPVVNQMIPQTTVKKTLEIIDPKTNEKVIITSPPKSSTNSTVLPTSNTSSSSSSPTNANGSSTPSGSGYVTSFSSGNVNLRKNKQSGETTPIKQDAASTTTSTPATPSSKAESTTEAETTSKPSTPTTVDSVSSTTTPDKSNVVTAAATTTAAATTTTTTTDTTTTTTTPEAETSTTTPATEVQSPVETTKEEQPKEEVKPTEVQPPVEPTKEEPIKEEPTNEEPTKEEPAKVEPIKEEPSVVESTTTDTKEEPIIVAEEKKQEETPVTPVTEKKEEPIVKPETPVTDSTAASTTVEKESTDSTTTATVSTTAAATTTNGKVEEELEEWEKKGEEDFNIVQSSDSSTSITPATSLVFRNSGEKIVYSKELMMSLKPKSMEEPTGPLKDLKNQIETNTNQNQLNRSGNKIGGNQQNKNMGMGGMNMNPNYPPQMNMKYPPQMNMKYPPKNYNNQVQGQQQQQQGNPNFNKYAPGYQYQQQIQQGMPPPTLQPNPYQPQQATYGITFSRDPVQPSISSQPVNEKRWVPTKVNALDDSQKVLRKANFILNKITPEKFDVLTEELLELGIVDDEKVHKGTIDLIFDKALNESKFCTMYTNLCKKIFEFEKVKKEIAKRAVFEKIGVIETENYHKMSNKQRDEFDQEHNVKAVFRTLLLSTCQKEYEKIPFETVDKVPEDLKPEEKTDFEEGQFKERKRIFGLIKFIGELFKQQMLSEKIVHGIMVSLIGELQRPSEIKLECFCKLLSIVGKTLSQNEQASKYLTSYFQRMQQLVDNSQTLSQRIRFLIQNVMDLKNSNWTLKVDESAKTLKEVEATQNKQEDNRKSNPTGVKNTSNVKNMFNASFNFGGPNVKPMMAPPMNYNKNAPGIKPPAQFQPKPYPYNNNYNNQQQQQQHFGGGNNMMNNNNNNYNRGPMGNMNNNMNNNMNNNNMNNMNSNNSTSNNSANSEIQKKWDAVSTSITDSINEFLELKDEEEFMECVKSYVPSTDLYPHVISQLISTACSKQKDEPLIKKLIFASVFDKKLFTTAQFKSGYELFISSLPDLFEDRPSAFKSVASVFYSFVLNQEGLITITQFANAFTKVLDDCGSSIPKILFEFILQFEDPKKAAQLFVDNKVGVQGFFTEKDFSKITQTAISYNKDLQPFFDIVKL.

Low complexity-rich tracts occupy residues 1 to 57 (MNFR…QQFY) and 84 to 94 (QSPIPQQQPQQ). Disordered regions lie at residues 1-189 (MNFR…EKRT), 259-563 (VIIT…WEKK), 683-702 (NQVQ…NKYA), and 1041-1063 (EATQ…NTSN). The segment covering 95-110 (PQQPQPSQPSPIPQQP) has biased composition (pro residues). 3 stretches are compositionally biased toward low complexity: residues 111 to 137 (LSPQ…QQQN), 168 to 179 (EEQQQQHQHQNN), and 267 to 296 (SSTN…STPS). The segment covering 297–323 (GSGYVTSFSSGNVNLRKNKQSGETTPI) has biased composition (polar residues). Residues 326–412 (DAASTTTSTP…AETSTTTPAT (87 aa)) show a composition bias toward low complexity. 3 stretches are compositionally biased toward basic and acidic residues: residues 420–432 (TTKE…EVKP), 441–471 (PTKE…KEEP), and 480–496 (DTKE…KQEE). The segment covering 517-526 (VTDSTAASTT) has biased composition (polar residues). Over residues 533–549 (DSTTTATVSTTAAATTT) the composition is skewed to low complexity. A compositionally biased stretch (basic and acidic residues) spans 1041-1052 (EATQNKQEDNRK). The segment covering 1053–1063 (SNPTGVKNTSN) has biased composition (polar residues). An MI domain is found at 1182 to 1305 (AVSTSITDSI…LITITQFANA (124 aa)).

It belongs to the eukaryotic initiation factor 4G family.

Functionally, probable component of the protein complex eIF4F, which is involved in the recognition of the mRNA cap, ATP-dependent unwinding of 5'-terminal secondary structure and recruitment of mRNA to the ribosome. This chain is Eukaryotic translation initiation factor 4 gamma (eif4g), found in Dictyostelium discoideum (Social amoeba).